The chain runs to 574 residues: Proline--tRNA ligase (574 aa).

The protein belongs to the class-II aminoacyl-tRNA synthetase family. ProS type 1 subfamily. In terms of assembly, homodimer.

The protein localises to the cytoplasm. It carries out the reaction tRNA(Pro) + L-proline + ATP = L-prolyl-tRNA(Pro) + AMP + diphosphate. Its function is as follows. Catalyzes the attachment of proline to tRNA(Pro) in a two-step reaction: proline is first activated by ATP to form Pro-AMP and then transferred to the acceptor end of tRNA(Pro). As ProRS can inadvertently accommodate and process non-cognate amino acids such as alanine and cysteine, to avoid such errors it has two additional distinct editing activities against alanine. One activity is designated as 'pretransfer' editing and involves the tRNA(Pro)-independent hydrolysis of activated Ala-AMP. The other activity is designated 'posttransfer' editing and involves deacylation of mischarged Ala-tRNA(Pro). The misacylated Cys-tRNA(Pro) is not edited by ProRS. The chain is Proline--tRNA ligase from Sodalis glossinidius (strain morsitans).